Here is a 119-residue protein sequence, read N- to C-terminus: 5-hydroxyisourate hydrolase (119 aa).

3 residues coordinate substrate: His10, Arg48, and Tyr116.

The protein belongs to the transthyretin family. 5-hydroxyisourate hydrolase subfamily. Homotetramer.

The enzyme catalyses 5-hydroxyisourate + H2O = 5-hydroxy-2-oxo-4-ureido-2,5-dihydro-1H-imidazole-5-carboxylate + H(+). Its pathway is purine metabolism; urate degradation; (S)-allantoin from urate: step 2/3. In terms of biological role, catalyzes the hydrolysis of 5-hydroxyisourate (HIU) to 2-oxo-4-hydroxy-4-carboxy-5-ureidoimidazoline (OHCU). This Deinococcus radiodurans (strain ATCC 13939 / DSM 20539 / JCM 16871 / CCUG 27074 / LMG 4051 / NBRC 15346 / NCIMB 9279 / VKM B-1422 / R1) protein is 5-hydroxyisourate hydrolase.